The following is a 273-amino-acid chain: Glutamate racemase (273 aa).

Substrate-binding positions include 19–20 (DS) and 51–52 (YG). The active-site Proton donor/acceptor is the Cys83. Substrate is bound at residue 84-85 (NT). Catalysis depends on Cys198, which acts as the Proton donor/acceptor. 199 to 200 (TH) provides a ligand contact to substrate.

The protein belongs to the aspartate/glutamate racemases family.

The enzyme catalyses L-glutamate = D-glutamate. The protein operates within cell wall biogenesis; peptidoglycan biosynthesis. Provides the (R)-glutamate required for cell wall biosynthesis. The protein is Glutamate racemase of Agrobacterium fabrum (strain C58 / ATCC 33970) (Agrobacterium tumefaciens (strain C58)).